The chain runs to 86 residues: MKNLIAELLVKLAEKEEESKELVAQVEALEIVVTALLRHLDPNTQQTLIASVEGALEGVQPESNVPQRDTELLQQYVKKLLRHPRT.

A coiled-coil region spans residues 1–36 (MKNLIAELLVKLAEKEEESKELVAQVEALEIVVTAL).

This sequence belongs to the IraP family. As to quaternary structure, interacts with RssB.

It is found in the cytoplasm. Inhibits RpoS proteolysis by regulating RssB activity, thereby increasing the stability of the sigma stress factor RpoS especially during phosphate starvation, but also in stationary phase and during nitrogen starvation. Its effect on RpoS stability is due to its interaction with RssB, which probably blocks the interaction of RssB with RpoS, and the consequent delivery of the RssB-RpoS complex to the ClpXP protein degradation pathway. This is Anti-adapter protein IraP from Cronobacter sakazakii (strain ATCC BAA-894) (Enterobacter sakazakii).